The primary structure comprises 538 residues: MLIKDIILTPMSLSAVAGLLPLLFVAFLVLHEPIWLLWYRYAARRHKCSMPRFIEKSFPLGIQRTMDMIKTAKSYTLLEVQYDRVFNKFKARTYLRQAPLQYQIFTIEPENIKTILATKFNDFGLGARFHTVGKVFGQGIFTLSGNGWKQSRSMLRPQFTKDQVCRIDQISSHAAELIKEMNRAMKVDQFIDVQHYFHKLTLDTATEFLFGESCESLNPENQSCIVARDGSEITAEQFVESYNFLLNYAFKRTLSSKVYWLFNSKEFRDHKKRAQSYIDYYVDKALYATSFAAENSIAEKDAAAESSGIYVFSLEMAKVTRDPVTIRDQIFNILIAGRDTTAATLSFAIHFLARNPDVFNKLREEVLDHFGTKEEQRPLSFELLKQAPYLKQVINEVLRLAPVLPLNFRTAVRDTTLPIGGGPEQKDPIFVPKGTAVYYSIYMVHRDIKYWGPDAHEFNPNRWENLKLDNVWAFLPFNGGPRICLGQQFALTELSLTLVRLLQEYSKIEMGPDFPESPRFSTTLTAQHAPPGVVVRFS.

Residues 18–38 form a helical membrane-spanning segment; the sequence is GLLPLLFVAFLVLHEPIWLLW. Cys-484 is a heme binding site.

The protein belongs to the cytochrome P450 family. Heme is required as a cofactor.

It localises to the membrane. The catalysed reaction is an omega-methyl-long-chain fatty acid + reduced [NADPH--hemoprotein reductase] + O2 = an omega-hydroxy-long-chain fatty acid + oxidized [NADPH--hemoprotein reductase] + H2O + H(+). The enzyme catalyses an (omega-1)-ethyl fatty acid + reduced [NADPH--hemoprotein reductase] + O2 = an (omega-1)-hydroxy-long-chain fatty acid + oxidized [NADPH--hemoprotein reductase] + H2O + H(+). It catalyses the reaction (9Z)-octadecenoate + reduced [NADPH--hemoprotein reductase] + O2 = 18-hydroxy-(9Z)-octadecenoate + oxidized [NADPH--hemoprotein reductase] + H2O + H(+). It carries out the reaction (9Z)-octadecenoate + reduced [NADPH--hemoprotein reductase] + O2 = 17-hydroxy-(9Z)-octadecenoate + oxidized [NADPH--hemoprotein reductase] + H2O + H(+). The catalysed reaction is (9Z,12Z)-octadecadienoate + reduced [NADPH--hemoprotein reductase] + O2 = 18-hydroxy-(9Z,12Z)-octadecadienoate + oxidized [NADPH--hemoprotein reductase] + H2O + H(+). The enzyme catalyses (9Z,12Z)-octadecadienoate + reduced [NADPH--hemoprotein reductase] + O2 = 17-hydroxy-(9Z,12Z)-octadecadienoate + oxidized [NADPH--hemoprotein reductase] + H2O + H(+). It catalyses the reaction hexadecanoate + reduced [NADPH--hemoprotein reductase] + O2 = 16-hydroxyhexadecanoate + oxidized [NADPH--hemoprotein reductase] + H2O + H(+). It carries out the reaction (9Z)-hexadecenoate + reduced [NADPH--hemoprotein reductase] + O2 = (9Z)-16-hydroxyhexadec-9-enoate + oxidized [NADPH--hemoprotein reductase] + H2O + H(+). The catalysed reaction is octadecanoate + reduced [NADPH--hemoprotein reductase] + O2 = 18-hydroxyoctadecanoate + oxidized [NADPH--hemoprotein reductase] + H2O + H(+). Functionally, catalyzes the first step of sophorolipid biosynthesis. Catalyzes the terminal (at the omega-position) or subterminal (at the omega(-1)-position) hydroxylation of a fatty acid. This converts the fatty acid to a substrate for the subsequent glycosyltransferase reactions. Oleic acid is the preferred substrate, but it acts on various other C-16, C-18 and C-20 saturated and unsaturated fatty acids, namely palmitic, palmitoleic, stearic, linoleic, cis-9,10-epoxystearic, trans-9,10-epoxystearic and arachidonic acid. This is Cytochrome P450 52-M1 from Starmerella bombicola (Yeast).